We begin with the raw amino-acid sequence, 1737 residues long: Intraflagellar transport protein osm-1 (1737 aa).

WD repeat units follow at residues 14 to 53, 63 to 103, 110 to 150, 151 to 189, 191 to 229, 233 to 273, and 511 to 553; these read DGEAKISNISCSPNGSRAAIACSDRSVALLDENGVQKDRF, GKKS…NEKK, VQPS…SLYK, TDETVVSIQTHPKRTSFVSAHQDGSIILYNFSSRTQSKI, TLQVPPYNLVFTNHGLVVATSDRRVLSYTENGVVQQQFD, QSEK…WDEG, and DQRS…EQVT. 7 TPR repeats span residues 700–737, 803–836, 848–881, 907–940, 979–1012, 1037–1070, and 1137–1170; these read NDTESAIGMYTSLHKWDEALELAKVLNYPEYEQLKTSY, SQLYDKAGDVYEKLKDFDKAVEYFKKGDAYGKAI, VTLEQEWGLHLEYIGQYDAAVNHFVEANDLKKAV, TGYYGEIADHYSNKGDFERAERLFVEAGLFNDAI, HGRFAEAEQLYITIGMPHKAIQMYDRVGRDDDVL, RGDLKAAEEQFLKAGDFRSAVNMYKDSEMWSDAY, and GTVHVRLATQLEEEGRLEDASKHYVEGNKPELAV.

Belongs to the IFT172 family. As to quaternary structure, component of the IFT complex B composed of at least che-2, che-13, dyf-1, dyf-3, dyf-6, dyf-11, dyf-13, ift-20, ift-74, ift-81, ifta-2, osm-1, osm-5 and osm-6. As to expression, expressed in amphid and phasmid chemosensory neurons, where it appears to concentrate at the base of the transition zones, which correspond to the basal bodies of motile and sensory cilia. Moves in the retrograde direction along cilia and dendrites, suggesting that it is retrieved from the distal endings of the cilia by a retrograde transport pathway that moves it along cilia and then dendrites, back to the neuronal cell body.

It localises to the cell projection. The protein localises to the cilium. Component of the intraflagellar transport (IFT) complex B required for transport of proteins in the motile cilium. May be required for ciliary entrance and transport of specific ciliary cargo proteins such as che-3 which are related to motility. Required for the maintenance and formation of chemosensory cilia that detect chemosensory cues. The chain is Intraflagellar transport protein osm-1 from Caenorhabditis elegans.